A 399-amino-acid polypeptide reads, in one-letter code: Flavohemoprotein (399 aa).

The Globin domain maps to 1–138; sequence MLAEKTRSII…IADIFITVEK (138 aa). Phosphothreonine is present on threonine 22. Histidine 85 contacts heme b. Catalysis depends on charge relay system residues tyrosine 95 and glutamate 137. The segment at 146–399 is reductase; that stretch reads WPGWKPFDIT…FGPKMSTVQV (254 aa). The 118-residue stretch at 147 to 264 folds into the FAD-binding FR-type domain; that stretch reads PGWKPFDITA…SAPAGDFAIN (118 aa). FAD is bound by residues tyrosine 189 and 207-210; that span reads RHYS. Position 281–286 (281–286) interacts with NADP(+); it reads GVGVTP. An FAD-binding site is contributed by 389–392; it reads PFGP.

This sequence belongs to the globin family. Two-domain flavohemoproteins subfamily. It in the C-terminal section; belongs to the flavoprotein pyridine nucleotide cytochrome reductase family. FAD serves as cofactor. Requires heme b as cofactor.

The protein localises to the cytoplasm. It carries out the reaction 2 nitric oxide + NADPH + 2 O2 = 2 nitrate + NADP(+) + H(+). It catalyses the reaction 2 nitric oxide + NADH + 2 O2 = 2 nitrate + NAD(+) + H(+). Is involved in NO detoxification in an aerobic process, termed nitric oxide dioxygenase (NOD) reaction that utilizes O(2) and NAD(P)H to convert NO to nitrate, which protects the fungus from various noxious nitrogen compounds. Therefore, plays a central role in the inducible response to nitrosative stress. Functionally, in the presence of oxygen and NADH, it has NADH oxidase activity, which leads to the generation of superoxide and H(2)O(2). Under anaerobic conditions, it also exhibits nitric oxide reductase and FAD reductase activities. However, all these reactions are much lower than NOD activity. This Saccharomyces cerevisiae (strain ATCC 204508 / S288c) (Baker's yeast) protein is Flavohemoprotein (YHB1).